The primary structure comprises 634 residues: DNA-directed RNA polymerase subunit gamma (634 aa).

The Zn(2+) site is built by C74, C76, C89, and C92. 3 residues coordinate Mg(2+): D471, D473, and D475.

It belongs to the RNA polymerase beta' chain family. RpoC1 subfamily. In terms of assembly, in cyanobacteria the RNAP catalytic core is composed of 2 alpha, 1 beta, 1 beta', 1 gamma and 1 omega subunit. When a sigma factor is associated with the core the holoenzyme is formed, which can initiate transcription. Mg(2+) serves as cofactor. Zn(2+) is required as a cofactor.

The catalysed reaction is RNA(n) + a ribonucleoside 5'-triphosphate = RNA(n+1) + diphosphate. In terms of biological role, DNA-dependent RNA polymerase catalyzes the transcription of DNA into RNA using the four ribonucleoside triphosphates as substrates. The chain is DNA-directed RNA polymerase subunit gamma from Prochlorococcus marinus (strain AS9601).